The following is a 123-amino-acid chain: ATP synthase epsilon chain (123 aa).

Belongs to the ATPase epsilon chain family. As to quaternary structure, F-type ATPases have 2 components, CF(1) - the catalytic core - and CF(0) - the membrane proton channel. CF(1) has five subunits: alpha(3), beta(3), gamma(1), delta(1), epsilon(1). CF(0) has three main subunits: a, b and c.

Its subcellular location is the cell inner membrane. In terms of biological role, produces ATP from ADP in the presence of a proton gradient across the membrane. The protein is ATP synthase epsilon chain (atpC) of Helicobacter pylori (strain ATCC 700392 / 26695) (Campylobacter pylori).